Reading from the N-terminus, the 383-residue chain is Putative dehydratase subunit YjiM (383 aa).

Belongs to the FldB/FldC dehydratase alpha/beta subunit family.

The sequence is that of Putative dehydratase subunit YjiM (yjiM) from Escherichia coli (strain K12).